Reading from the N-terminus, the 94-residue chain is Aspartyl/glutamyl-tRNA(Asn/Gln) amidotransferase subunit C (94 aa).

It belongs to the GatC family. As to quaternary structure, heterotrimer of A, B and C subunits.

The enzyme catalyses L-glutamyl-tRNA(Gln) + L-glutamine + ATP + H2O = L-glutaminyl-tRNA(Gln) + L-glutamate + ADP + phosphate + H(+). It catalyses the reaction L-aspartyl-tRNA(Asn) + L-glutamine + ATP + H2O = L-asparaginyl-tRNA(Asn) + L-glutamate + ADP + phosphate + 2 H(+). Allows the formation of correctly charged Asn-tRNA(Asn) or Gln-tRNA(Gln) through the transamidation of misacylated Asp-tRNA(Asn) or Glu-tRNA(Gln) in organisms which lack either or both of asparaginyl-tRNA or glutaminyl-tRNA synthetases. The reaction takes place in the presence of glutamine and ATP through an activated phospho-Asp-tRNA(Asn) or phospho-Glu-tRNA(Gln). This is Aspartyl/glutamyl-tRNA(Asn/Gln) amidotransferase subunit C from Syntrophomonas wolfei subsp. wolfei (strain DSM 2245B / Goettingen).